The following is a 75-amino-acid chain: uncharacterized protein (75 aa).

This is an uncharacterized protein from Acidithiobacillus ferridurans.